The chain runs to 512 residues: Histidine ammonia-lyase (512 aa).

Positions 143 to 145 form a cross-link, 5-imidazolinone (Cys-Gly); the sequence is CSG. Ser-144 carries the 2,3-didehydroalanine (Ser) modification.

The protein belongs to the PAL/histidase family. Contains an active site 4-methylidene-imidazol-5-one (MIO), which is formed autocatalytically by cyclization and dehydration of residues Cys-Ser-Gly.

The protein resides in the cytoplasm. It catalyses the reaction L-histidine = trans-urocanate + NH4(+). The protein operates within amino-acid degradation; L-histidine degradation into L-glutamate; N-formimidoyl-L-glutamate from L-histidine: step 1/3. The polypeptide is Histidine ammonia-lyase (Streptomyces coelicolor (strain ATCC BAA-471 / A3(2) / M145)).